Here is a 473-residue protein sequence, read N- to C-terminus: Photosystem II CP43 reaction center protein (473 aa).

Residues methionine 1 to glutamate 14 constitute a propeptide that is removed on maturation. Threonine 15 is modified (N-acetylthreonine). A Phosphothreonine modification is found at threonine 15. 5 consecutive transmembrane segments (helical) span residues leucine 69–alanine 93, leucine 134–asparagine 155, lysine 178–threonine 200, lysine 255–serine 275, and tryptophan 291–alanine 312. Residue glutamate 367 coordinates [CaMn4O5] cluster. A helical membrane pass occupies residues arginine 447 to proline 471.

The protein belongs to the PsbB/PsbC family. PsbC subfamily. In terms of assembly, PSII is composed of 1 copy each of membrane proteins PsbA, PsbB, PsbC, PsbD, PsbE, PsbF, PsbH, PsbI, PsbJ, PsbK, PsbL, PsbM, PsbT, PsbX, PsbY, PsbZ, Psb30/Ycf12, at least 3 peripheral proteins of the oxygen-evolving complex and a large number of cofactors. It forms dimeric complexes. Binds multiple chlorophylls and provides some of the ligands for the Ca-4Mn-5O cluster of the oxygen-evolving complex. It may also provide a ligand for a Cl- that is required for oxygen evolution. PSII binds additional chlorophylls, carotenoids and specific lipids. serves as cofactor.

Its subcellular location is the plastid. The protein localises to the chloroplast thylakoid membrane. In terms of biological role, one of the components of the core complex of photosystem II (PSII). It binds chlorophyll and helps catalyze the primary light-induced photochemical processes of PSII. PSII is a light-driven water:plastoquinone oxidoreductase, using light energy to abstract electrons from H(2)O, generating O(2) and a proton gradient subsequently used for ATP formation. This chain is Photosystem II CP43 reaction center protein, found in Adiantum capillus-veneris (Maidenhair fern).